The sequence spans 493 residues: 6-aminohexanoate-cyclic-dimer hydrolase (493 aa).

Residues Lys72 and Ser150 each act as charge relay system in the active site. Ser174 (acyl-ester intermediate) is an active-site residue.

It belongs to the amidase family. In terms of assembly, homodimer.

The enzyme catalyses 1,8-diazacyclotetradecane-2,9-dione + H2O = N-(6-aminohexanoyl)-6-aminohexanoate. The protein operates within xenobiotic degradation; nylon-6 oligomer degradation. Functionally, catalyzes the hydrolysis of 6-aminohexanoic acid cyclic dimer (1,8-diazacyclotetradecane-2,9-dione) to form the linear dimer 6-aminohexanoyl-6-aminohexanoic acid. In Pseudomonas sp. (strain NK87), this protein is 6-aminohexanoate-cyclic-dimer hydrolase (nylA).